The primary structure comprises 523 residues: GMP synthase [glutamine-hydrolyzing] (523 aa).

A Glutamine amidotransferase type-1 domain is found at 9–198; sequence PVLVVDFGAQ…LTEIAGLEQN (190 aa). Cys86 functions as the Nucleophile in the catalytic mechanism. Residues His172 and Glu174 contribute to the active site. A GMPS ATP-PPase domain is found at 199–397; that stretch reads WTAANIAEEL…LGLPEEIVGR (199 aa). 227–233 provides a ligand contact to ATP; that stretch reads SGGVDSA.

In terms of assembly, homodimer.

It carries out the reaction XMP + L-glutamine + ATP + H2O = GMP + L-glutamate + AMP + diphosphate + 2 H(+). The protein operates within purine metabolism; GMP biosynthesis; GMP from XMP (L-Gln route): step 1/1. In terms of biological role, catalyzes the synthesis of GMP from XMP. The chain is GMP synthase [glutamine-hydrolyzing] from Corynebacterium glutamicum (strain ATCC 13032 / DSM 20300 / JCM 1318 / BCRC 11384 / CCUG 27702 / LMG 3730 / NBRC 12168 / NCIMB 10025 / NRRL B-2784 / 534).